Here is a 499-residue protein sequence, read N- to C-terminus: Thioredoxin reductase 1, cytoplasmic (499 aa).

Residues 22–23 (SG), 42–43 (DF), 58–59 (TC), and 63–67 (GCIPK) contribute to the FAD site. The cysteines at positions 59 and 64 are disulfide-linked. Lysine 68 carries the N6-succinyllysine modification. The residue at position 131 (tyrosine 131) is a Phosphotyrosine. FAD contacts are provided by residues 131–132 (YG) and threonine 161. NADP(+) contacts are provided by residues arginine 166, 198–204 (ASYVALE), 221–222 (RS), arginine 226, 226–228 (RGF), 292–293 (GR), and lysine 315. Tyrosine 200 provides a ligand contact to FAD. Residues aspartate 334, 341-343 (ELT), and histidine 472 each bind FAD. Glutamate 341 contributes to the NADP(+) binding site. Histidine 472 acts as the Proton acceptor in catalysis. A cross-link (cysteinyl-selenocysteine (Cys-Sec)) is located at residues 497–498 (CU). Residue selenocysteine 498 is a non-standard amino acid, selenocysteine.

Belongs to the class-I pyridine nucleotide-disulfide oxidoreductase family. In terms of assembly, homodimer. FAD serves as cofactor. ISGylated.

It is found in the cytoplasm. The enzyme catalyses [thioredoxin]-dithiol + NADP(+) = [thioredoxin]-disulfide + NADPH + H(+). It catalyses the reaction H2O2 + NADPH + H(+) = NADP(+) + 2 H2O. In terms of biological role, reduces disulfideprotein thioredoxin (Trx) to its dithiol-containing form. Homodimeric flavoprotein involved in the regulation of cellular redox reactions, growth and differentiation. Contains a selenocysteine residue at the C-terminal active site that is essential for catalysis. Also has reductase activity on hydrogen peroxide (H2O2). The chain is Thioredoxin reductase 1, cytoplasmic (TXNRD1) from Bos taurus (Bovine).